The sequence spans 341 residues: 33 kDa chaperonin (341 aa).

2 disulfides stabilise this stretch: C245-C247 and C278-C281.

Belongs to the HSP33 family. Under oxidizing conditions two disulfide bonds are formed involving the reactive cysteines. Under reducing conditions zinc is bound to the reactive cysteines and the protein is inactive.

The protein localises to the cytoplasm. Redox regulated molecular chaperone. Protects both thermally unfolding and oxidatively damaged proteins from irreversible aggregation. Plays an important role in the bacterial defense system toward oxidative stress. This chain is 33 kDa chaperonin, found in Thermus thermophilus (strain ATCC 27634 / DSM 579 / HB8).